The chain runs to 1854 residues: MADVDDGSELLFFDTFSHEEVTDINLDLVQFPKPVFITQVRIIPLGARVQADFPGGVRLGATNPSKFDLEFFVNDLGMPAASAFENLGLLRYNQNDCIHLDCSQEKIVTDGLVLRGWYSTITLAIYGIFTNSVTEPIASPTLPCEPVGPEIANLSGEVLLQEDVLKDEWQEPMQAELLTAHKGNVSDYDPEDMEYGMSRDHYHQHAEEQEQREMRRLRRSTHSTDHSPPPPRRSHTHSESNDREYIRCSRDKGSRDWSRSPEYSSHRSRRKRSERSRSVVDEHKWPRTPPASIDSPTRPRSPDTMDYEDEDSRSHYKMQSSHYRHSSESLHRGERDRDDEDRSCTPQEQFEPILSDDEIIGDDEEDDAVDAAAIAEYERELEAAAAAAPPAIDAFEPWQKPLLVFEGDMAAHFCKELETLKLLFKKLVLQTRCENVNAFSEEHGASVDEREQFVYLGEQLNNQLGYLAQHYKRRNFVLQQFFGNDELHLRQAANVLQIALSFQAACMQPQPAFKIRHIKLGARMAELLGSSEELFQHLLKEHKFDIFEAVFRLYHEPYMALSIKLQLLKAVYALLDTRMGIEHFMGAKNNGYQMIVEAIKTAKLTRTKYALQAIIKKLHLWEGLESVQIWCRRLFVDRIIIPGNRDQMEDTVITCQQIEFAFEMLMDALFSSQLSYLQPRRFLPVSKKFEVVTDPTAQRSFGNALQSYLGQNSLAESLLVMLANCKELPATTYLSMLDLMHTLLRSHVGIDYFVDDAFPVTQTIVAILLGLDEVPRNPEEKEEKAEKSDAEDKAMEVENEAVEAGGEKPTPPTADEEGKPVAAPISVPAPAAAPQVRPRPILRPVLPRLARLGIEMSYKVQTRYHLDAIAYAAAAPEYDAVKLATHMHAIYSQTCDPAGRQHTVEVLGLNNNLKIFMDLIKKEQRLQTQRQLSSPGTKYKSPVLSYAVDMVDACVRYCEQLDYLIEHGGVILELAKNHETFEPSVSAVLQEMYVYMKPLEAINVFVYDDIMPLVEVIGRSLDYLTTFPGDLIMAMRILRYLSISKPLAGQKAPPVTEELKHRFVALQLYAADGVQLCIQIMERLCAYFEQPGAHAPALMTIQGVHCCQIMLPTLQILRELLSYAILCRDGTYKDLTAIDHLVKVYYLLYYFPTRCQAGPEVEQCKMEVVQTLLAYTQPNEQDEESLHKSLWTLMIREVLKNVDGPAHFIPGLKLLAELLPLPLPMPQPLCDQLQQQHKQRLITERKLWSAHLHPQSGQIAKLVEALAPSSFPQLSELLQRVCMQLSDLAPNMTLLIAKTITELLCNEYQTSNCIPTTNLERLLRFSTRLCAFAPLKSSMLSILSGKFWELFQSLLALNEFNDVVSNCQEAVHRILDSFLDSGISLISHKSTASPALNLAAALPPKELIPRIIDAVFSNLTSVEVTHGISILAVRNLVILTEHDFTFYHLAQLLKQKITEFQAWMERVILHNETVEYNANIESLILLLRSLTQIEPPPAMSAMPHRTLKLGATELAQLVEFQDIELAKPPVLSRILTVMEKHKAVANEAALSDLKQLILLQASKQEILAGTSTETPPEAEGEANPSASSCSASLTVEPYLPQAEGIVTQYEARPIFTRFCATAENAQLTARYWLDPLPIELIEDMNEPIYERIACDLTDLANVCLNPDLNVAGDSKRVMNLSGSPQSNREMTPTAPCFRTRRVEVEPATGRPEKKMFVSSVRGRGFARPPPSRGDLFRSRPPNTSRPPSLHVDDFLALETCGAQPTGPTGYNKIPSMLRGSRVGRNRGSRISAAAAFRQKKMMRIGSPSSWAESPGSYRSASDSHFSSSDSHYSSPHYSGRPRGRGLRSRPSYLR.

At serine 186 the chain carries Phosphoserine. Composition is skewed to basic and acidic residues over residues 202-214 and 236-259; these read YHQH…QREM and THSE…DWSR. Disordered regions lie at residues 202–361, 777–821, 1570–1589, 1720–1788, and 1804–1854; these read YHQH…EIIG, NPEE…GKPV, TSTE…ASSC, VRGR…NRGS, and IGSP…SYLR. Phosphoserine is present on residues serine 258, serine 260, and serine 276. A compositionally biased stretch (basic and acidic residues) spans 275–285; the sequence is RSRSVVDEHKW. Threonine 288 is modified (phosphothreonine). At serine 295 the chain carries Phosphoserine. Position 297 is a phosphothreonine (threonine 297). Serine 301 and serine 312 each carry phosphoserine. 2 stretches are compositionally biased toward basic and acidic residues: residues 325-343 and 777-796; these read HSSE…EDRS and NPEE…KAME. Positions 779 to 808 form a coiled coil; it reads EEKEEKAEKSDAEDKAMEVENEAVEAGGEK. 2 stretches are compositionally biased toward low complexity: residues 1738-1748 and 1816-1838; these read SRPPNTSRPPS and SYRS…PHYS.

It belongs to the vir family. In terms of assembly, component of the WMM complex, a N6-methyltransferase complex composed of a catalytic subcomplex, named MAC, and of an associated subcomplex, named MACOM. The MAC subcomplex is composed of Ime4/Mettl3 and Mettl14. The MACOM subcomplex is composed of fl(2)d, Flacc/Xio, Hakai, vir, and, in some cases of nito. Part of a complex containing fl(2)d, Sxl and vir.

It localises to the nucleus. Associated component of the WMM complex, a complex that mediates N6-methyladenosine (m6A) methylation of mRNAs, a modification that plays a role in the efficiency of mRNA splicing and is required for sex determination. Required for sex determination and dosage compensation via Sxl alternative splicing: m6A methylation acts as a key regulator of Sxl pre-mRNA and promotes female-specific alternative splicing of Sxl, which determines female physiognomy. M6A methylation is also required for neuronal functions. Required for proper inclusion of regulated exons in Ubx transcripts, leading to isoforms Ia/b and IIa/b. In Drosophila melanogaster (Fruit fly), this protein is Protein virilizer.